The chain runs to 691 residues: Elongation factor G (691 aa).

Residues 6–281 (SKYRNIGIMA…GVVDFLPSPI (276 aa)) enclose the tr-type G domain. GTP contacts are provided by residues 15–22 (AHIDAGKT), 79–83 (DTPGH), and 133–136 (NKMD).

This sequence belongs to the TRAFAC class translation factor GTPase superfamily. Classic translation factor GTPase family. EF-G/EF-2 subfamily.

The protein localises to the cytoplasm. Its function is as follows. Catalyzes the GTP-dependent ribosomal translocation step during translation elongation. During this step, the ribosome changes from the pre-translocational (PRE) to the post-translocational (POST) state as the newly formed A-site-bound peptidyl-tRNA and P-site-bound deacylated tRNA move to the P and E sites, respectively. Catalyzes the coordinated movement of the two tRNA molecules, the mRNA and conformational changes in the ribosome. The protein is Elongation factor G of Wolbachia pipientis wMel.